Consider the following 325-residue polypeptide: Post-GPI attachment to proteins factor 2-like (325 aa).

6 helical membrane passes run 80–100 (VVTA…AYVF), 130–150 (YFWR…AFVY), 171–191 (LLIT…GGVT), 205–225 (IFIT…KLNG), 243–263 (WKKI…VFFA), and 276–296 (WFAF…FTII).

This sequence belongs to the PGAP2 family.

Its subcellular location is the membrane. The chain is Post-GPI attachment to proteins factor 2-like from Drosophila melanogaster (Fruit fly).